The sequence spans 418 residues: ORC1-type DNA replication protein 2 (418 aa).

Residues 72-76, Tyr-218, and Arg-230 each bind ATP; that span reads TGKTV.

Belongs to the CDC6/cdc18 family.

Functionally, involved in regulation of DNA replication. The chain is ORC1-type DNA replication protein 2 (cdc6-2) from Sulfurisphaera tokodaii (strain DSM 16993 / JCM 10545 / NBRC 100140 / 7) (Sulfolobus tokodaii).